We begin with the raw amino-acid sequence, 145 residues long: Putative antiporter subunit mnhG2 (145 aa).

3 helical membrane passes run 11–31 (IAAV…IGIV), 51–71 (VLLT…FFSV), and 72–92 (RLLL…HLVA).

This sequence belongs to the CPA3 antiporters (TC 2.A.63) subunit G family. As to quaternary structure, may form a heterooligomeric complex that consists of seven subunits: mnhA2, mnhB2, mnhC2, mnhD2, mnhE2, mnhF2 and mnhG2.

It is found in the cell membrane. In Staphylococcus aureus (strain MRSA252), this protein is Putative antiporter subunit mnhG2 (mnhG2).